The primary structure comprises 97 residues: Co-chaperonin GroES (97 aa).

This sequence belongs to the GroES chaperonin family. Heptamer of 7 subunits arranged in a ring. Interacts with the chaperonin GroEL.

The protein resides in the cytoplasm. Together with the chaperonin GroEL, plays an essential role in assisting protein folding. The GroEL-GroES system forms a nano-cage that allows encapsulation of the non-native substrate proteins and provides a physical environment optimized to promote and accelerate protein folding. GroES binds to the apical surface of the GroEL ring, thereby capping the opening of the GroEL channel. This chain is Co-chaperonin GroES, found in Escherichia fergusonii (strain ATCC 35469 / DSM 13698 / CCUG 18766 / IAM 14443 / JCM 21226 / LMG 7866 / NBRC 102419 / NCTC 12128 / CDC 0568-73).